The chain runs to 1039 residues: RNA-binding protein Unr (1039 aa).

Polar residues predominate over residues 49 to 62 (TTLGLQPQGQGPSP). 2 disordered regions span residues 49-126 (TTLG…QQQH) and 165-184 (SIFG…PSQT). Low complexity-rich tracts occupy residues 63 to 80 (QQQQ…QHQQ), 89 to 126 (QQHM…QQQH), and 165 to 182 (SIFG…ADPS). Positions 186–250 (RETGIIEKLL…GKPIASQVSK (65 aa)) constitute a CSD 1 domain. The CSD 2; degenerate domain maps to 261–337 (RVTGTVTTEL…GNLGACHIRL (77 aa)). The CSD 3 domain maps to 345–413 (KYRGVVCSMK…GREFACNITR (69 aa)). Residues 428–503 (VYKGQVLKSL…RDQLQRATSI (76 aa)) form the CSD 4; degenerate domain. A CSD 5 domain is found at 517 to 585 (REQGTIASLK…SRLQAIRIKH (69 aa)). A CSD 6; degenerate domain is found at 593 to 673 (FETLVASNIE…KECIAVNVQQ (81 aa)). The interval 721–741 (QNGYVMHGSPGGSTSSVGSNN) is disordered. Positions 732–741 (GSTSSVGSNN) are enriched in low complexity. In terms of domain architecture, CSD 7 spans 763–831 (VYRGFIAVMK…NCLPAENVRM (69 aa)). The CSD 8; degenerate domain occupies 846–919 (THNGVVARPL…SGRAACVNAV (74 aa)). One can recognise a CSD 9 domain in the interval 922 to 987 (KKRATVDSIK…GKSSACNVLK (66 aa)).

The protein belongs to the UNR family. As to quaternary structure, interacts with Sxl; cooperates with Sxl to prevent translation of msl-2 transcripts. Interacts with mle; promoting association between mle and roX2 non-coding RNA. Interacts (via CSD domain 7-9) with pAbp; promoting translation inhibition of msl-2 transcripts.

It localises to the cytoplasm. Its function is as follows. RNA-binding protein that acts as a regulator of dosage compensation in both males and females. In males, acts as positive regulator of dosage compensation by promoting assembly of the MSL complex, a multiprotein complex that mediates X-chromosome dosage compensation. Promotes MSL complex assembly via association with roX1 and roX2 non-coding RNA components of the MSL complex, facilitating the interaction between non-coding RNAs and mle. In females, acts as an inhibitor of dosage compensation together with Sxl by preventing production of msl-2 protein, an essential component of the MSL complex. Specifically binds to the 3'-UTR of msl-2 transcripts, and cooperates with Sxl to prevent translation initiation of msl-2 transcripts. Mechanistically, Sxl and Unr inhibit translation initiation by preventing ribosome recruitment after pAbp-mediated recruitment of the eIF4F complex. This chain is RNA-binding protein Unr, found in Drosophila melanogaster (Fruit fly).